Reading from the N-terminus, the 82-residue chain is Putative membrane protein insertion efficiency factor (82 aa).

The protein belongs to the UPF0161 family.

Its subcellular location is the cell membrane. Its function is as follows. Could be involved in insertion of integral membrane proteins into the membrane. This Streptococcus uberis (strain ATCC BAA-854 / 0140J) protein is Putative membrane protein insertion efficiency factor.